We begin with the raw amino-acid sequence, 1152 residues long: Fork-head transcriptional regulator FHL1 (1152 aa).

The interval 55–147 (TATNNVLPES…SEDDNNNNNN (93 aa)) is disordered. Basic and acidic residues predominate over residues 64–83 (SNKKDKPIDTQDLHEDDPKA). Low complexity predominate over residues 87–101 (TTSNGESTSNSNSVS). Positions 126–135 (VPVTSNSKSL) are enriched in polar residues. The FHA domain maps to 171 to 229 (VVLGRKSNDETLQQNVDVHLSSKKAISRRHAKIFYNFGTQRFEISILGRNGAFVDNVFV). Disordered stretches follow at residues 254–362 (LPSN…RKNS) and 514–557 (KKQL…PPAS). The segment covering 271–286 (KQFNPSDAINLRSNLY) has biased composition (polar residues). The span at 296–307 (PKRKPQPSKKVK) shows a compositional bias: basic residues. The segment covering 328–358 (TTAISPTASISTSTNAATAATATTPATTTAA) has biased composition (low complexity). Coiled-coil stretches lie at residues 449–537 (DDDE…SLAK) and 734–777 (ELYI…QKSL). Positions 659–756 (KPNISFQIMI…QREIAKAKAK (98 aa)) form a DNA-binding region, fork-head. Disordered regions lie at residues 787–833 (ASPY…GTSP), 846–867 (RGNG…MNDP), 951–1010 (HEGI…VPQQ), and 1057–1152 (PAMQ…AKTE). 3 stretches are compositionally biased toward low complexity: residues 804-826 (SQSS…GSTT), 851-863 (TPAT…SLPA), and 973-987 (TTTS…TTPQ). 2 stretches are compositionally biased toward pro residues: residues 996 to 1006 (VKPPISTPLPQ) and 1072 to 1082 (TSVPVPLPVPS). Composition is skewed to polar residues over residues 1115–1128 (SSLS…SNKP) and 1143–1152 (QATNKIAKTE).

In terms of assembly, interacts with IFH1 and TBF1.

It localises to the nucleus. Functionally, in complex with IFH1, acts as a transcriptional regulator of rRNA and ribosomal protein genes. The FHL1-IFH1 complex is targeted to the ribosomal protein genes by the DNA-binding factor TBF1. The sequence is that of Fork-head transcriptional regulator FHL1 (FHL1) from Candida albicans (strain SC5314 / ATCC MYA-2876) (Yeast).